A 1901-amino-acid polypeptide reads, in one-letter code: Methylcytosine dioxygenase tet3 (1901 aa).

A CXXC-type zinc finger spans residues 58–99; sequence SNKKRKRCGVCVPCLRKEPCGACYNCVNRSTSHQICKMRKCE. C65, C68, C71, C77, C80, C83, C93, and C98 together coordinate Zn(2+). 4 disordered regions span residues 434–455, 602–658, 751–787, and 808–867; these read KNAL…KKSS, WWVP…EGSA, KDQC…QNDL, and DFSL…PVSR. 2 stretches are compositionally biased toward polar residues: residues 442 to 455 and 602 to 614; these read SPRQ…KKSS and WWVP…PVSK. Residues 640–652 are compositionally biased toward basic residues; sequence KPQRKQVQIKKPK. Residues 758-771 are compositionally biased toward low complexity; that stretch reads STHDTSSSSGQGDS. Residues 847–867 show a composition bias toward polar residues; that stretch reads ENSTKPATHSNPALSNNPVSR. The Zn(2+) site is built by C957, C959, C1017, H1043, and C1045. R1085 lines the 2-oxoglutarate pocket. 5 residues coordinate Zn(2+): C1095, C1097, C1113, C1122, and C1182. Residue C1198 coordinates 2-oxoglutarate. H1204 contributes to the Zn(2+) binding site. Fe cation is bound by residues H1206 and D1208. H1240 contributes to the 2-oxoglutarate binding site. Disordered regions lie at residues 1282–1338, 1457–1501, 1591–1624, and 1680–1745; these read SEPA…QQTK, YGSE…VETT, SNAP…PGKV, and SATP…DEEI. Residues 1291–1325 are compositionally biased toward basic and acidic residues; it reads RQLEAKKAAAEKKKLQKEKLVSPDKTKQEPSDKKT. Positions 1326–1338 are enriched in polar residues; it reads CQQNPGVPQQQTK. Residues 1465–1474 are compositionally biased toward basic and acidic residues; the sequence is SFRRSSEVPH. Polar residues predominate over residues 1477-1487; the sequence is SLQNPSSQKSV. Composition is skewed to polar residues over residues 1680–1693 and 1702–1719; these read SATP…TPCS and SFPN…SQNH. H1780 contributes to the Fe cation binding site. 1795–1797 serves as a coordination point for 2-oxoglutarate; the sequence is RIS.

Belongs to the TET family. The cofactor is Fe(2+). Zn(2+) serves as cofactor.

Its subcellular location is the nucleus. The protein localises to the chromosome. It catalyses the reaction a 5-methyl-2'-deoxycytidine in DNA + 2-oxoglutarate + O2 = a 5-hydroxymethyl-2'-deoxycytidine in DNA + succinate + CO2. The enzyme catalyses a 5-hydroxymethyl-2'-deoxycytidine in DNA + 2-oxoglutarate + O2 = a 5-formyl-2'-deoxycytidine in DNA + succinate + CO2 + H2O. It carries out the reaction a 5-formyl-2'-deoxycytidine in DNA + 2-oxoglutarate + O2 = a 5-carboxyl-2'-deoxycytidine in DNA + succinate + CO2 + H(+). Functionally, dioxygenase that catalyzes the conversion of the modified genomic base 5-methylcytosine (5mC) into 5-hydroxymethylcytosine (5hmC) and plays a key role in epigenetic chromatin reprogramming during embryonic development. Conversion of 5mC into 5hmC probably constitutes the first step in cytosine demethylation. Selectively binds to the promoter region of target genes and contributes to regulate the expression of numerous developmental genes, including pax6, rax, sox9 and six3. May also contribute to the regulation of target genes in ways that do not require its enzyme activity. This Xenopus tropicalis (Western clawed frog) protein is Methylcytosine dioxygenase tet3.